Consider the following 292-residue polypeptide: Aquaporin-3 (292 aa).

Over 1–24 (MGRQKELVNRCGEMLHIRYRLLRQ) the chain is Cytoplasmic. The helical transmembrane segment at 25–42 (ALAECLGTLILVMFGCGS) threads the bilayer. Residues 43–56 (VAQVVLSRGTHGGF) are Extracellular-facing. A helical transmembrane segment spans residues 57-74 (LTINLAFGFAVTLGILIA). The Cytoplasmic portion of the chain corresponds to 75–78 (GQVS). An intramembrane region (discontinuously helical) is located at residues 79-92 (GAHLNPAVTFAMCF). The NPA 1 motif lies at 83–85 (NPA). Residues 93-100 (LAREPWIK) lie on the Cytoplasmic side of the membrane. Residues 101 to 121 (LPVYTLAQTLGAFLGAGIIFG) traverse the membrane as a helical segment. At 122-159 (LYYDAIWAFANNQLIVSGPNGTAGIFATYPSGHLDMVN) the chain is on the extracellular side. Residue N141 is glycosylated (N-linked (GlcNAc...) asparagine). A helical membrane pass occupies residues 160–177 (GFFDQFIGTASLIVCVLA). At 178-189 (IVDPYNNPVPRG) the chain is on the cytoplasmic side. Residues 190-206 (LEAFTVGLVVLVIGTSM) traverse the membrane as a helical segment. Topologically, residues 207–210 (GFNS) are extracellular. Residues 211–224 (GYAVNPARDFGPRL) constitute an intramembrane region (discontinuously helical). Residues 215-217 (NPA) carry the NPA 2 motif. Residues 225 to 242 (FTAIAGWGSEVFTTGRHW) lie on the Extracellular side of the membrane. Residues 243-264 (WWVPIVSPLLGSIAGVFVYQLM) traverse the membrane as a helical segment. Topologically, residues 265–292 (IGCHLEPPPPSTDEENVKLSHVKHKEQM) are cytoplasmic.

It belongs to the MIP/aquaporin (TC 1.A.8) family. As to quaternary structure, homotetramer; each monomer provides an independent glycerol/water pore. Could also exist in other oligomeric states.

It localises to the cell membrane. Its subcellular location is the basolateral cell membrane. The catalysed reaction is glycerol(in) = glycerol(out). It catalyses the reaction H2O(in) = H2O(out). The enzyme catalyses urea(in) = urea(out). It carries out the reaction H2O2(out) = H2O2(in). Its function is as follows. Aquaglyceroporins form homotetrameric transmembrane channels, with each monomer independently mediating glycerol and water transport across the plasma membrane along their osmotic gradient. Could also be permeable to urea. Also participates in cell permeability to H2O2 and H2O2-mediated signaling. In skin, transports glycerol to the epidermis and stratum corneum, where it maintains hydration, elasticity, and supports lipid biosynthesis for barrier repair. In kidney, contributes to the reabsorption of water, helping the body maintain proper fluid balance. In Bos taurus (Bovine), this protein is Aquaporin-3.